A 280-amino-acid chain; its full sequence is MIHPLLQQPSYRIIDQSSLGTMFQAEQSFATDDTLCASTQERGAVLRAWVHTDTIVLGIQDARLPHLKEGIRYLHEQGFRPVVRNSGGLAVVLDDDVLNLSLILPEKDGIQIDSGYEAMTSLIQHMFQDVTNDIVPGEVVGSYCPGSFDLSIDGKKFAGISQRRVRGGVAVQIYLSVRQSGSARAEIIRDFYDLAIQGEETKFTYPTIVPETMASLEDLLGIPLTVQDVLTRAYRVLSTVSLLQNATLTADEQTMFASQLERMWKRNEPLRDIEQQLTEE.

The 206-residue stretch at Gln40 to Asn245 folds into the BPL/LPL catalytic domain. The Acyl-thioester intermediate role is filled by Cys144.

This sequence belongs to the octanoyltransferase LipL family.

The catalysed reaction is N(6)-octanoyl-L-lysyl-[glycine-cleavage complex H protein] + L-lysyl-[lipoyl-carrier protein] = N(6)-octanoyl-L-lysyl-[lipoyl-carrier protein] + L-lysyl-[glycine-cleavage complex H protein]. The protein operates within protein modification; protein lipoylation via endogenous pathway; protein N(6)-(lipoyl)lysine from octanoyl-[acyl-carrier-protein]. Functionally, catalyzes the amidotransfer (transamidation) of the octanoyl moiety from octanoyl-GcvH to the lipoyl domain of the E2 subunit of lipoate-dependent enzymes. This Exiguobacterium sp. (strain ATCC BAA-1283 / AT1b) protein is Octanoyl-[GcvH]:protein N-octanoyltransferase.